The following is a 219-amino-acid chain: Adenylate kinase (219 aa).

10-15 contributes to the ATP binding site; sequence GAGKGT. The segment at 30–59 is NMP; that stretch reads ATGDLFRANISQGTDLGKQARAYMDAGQLV. Residues Thr31, Arg36, 57–59, 85–88, and Gln92 contribute to the AMP site; these read QLV and GFPR. Residues 126-164 form an LID region; it reads GRRVCRNNSAHVFHLTYNPPKAEGVCDACGGELYQRDDD. ATP is bound by residues Arg127 and 137–138; that span reads VF. 2 residues coordinate AMP: Arg161 and Arg172. Position 200 (Gly200) interacts with ATP.

This sequence belongs to the adenylate kinase family. Monomer.

The protein localises to the cytoplasm. The catalysed reaction is AMP + ATP = 2 ADP. It participates in purine metabolism; AMP biosynthesis via salvage pathway; AMP from ADP: step 1/1. Catalyzes the reversible transfer of the terminal phosphate group between ATP and AMP. Plays an important role in cellular energy homeostasis and in adenine nucleotide metabolism. The sequence is that of Adenylate kinase from Streptomyces griseus subsp. griseus (strain JCM 4626 / CBS 651.72 / NBRC 13350 / KCC S-0626 / ISP 5235).